A 315-amino-acid chain; its full sequence is UDP-3-O-acyl-N-acetylglucosamine deacetylase (315 aa).

3 residues coordinate Zn(2+): His-78, His-235, and Asp-239. Catalysis depends on His-262, which acts as the Proton donor.

Belongs to the LpxC family. Requires Zn(2+) as cofactor.

The enzyme catalyses a UDP-3-O-[(3R)-3-hydroxyacyl]-N-acetyl-alpha-D-glucosamine + H2O = a UDP-3-O-[(3R)-3-hydroxyacyl]-alpha-D-glucosamine + acetate. Its pathway is glycolipid biosynthesis; lipid IV(A) biosynthesis; lipid IV(A) from (3R)-3-hydroxytetradecanoyl-[acyl-carrier-protein] and UDP-N-acetyl-alpha-D-glucosamine: step 2/6. Catalyzes the hydrolysis of UDP-3-O-myristoyl-N-acetylglucosamine to form UDP-3-O-myristoylglucosamine and acetate, the committed step in lipid A biosynthesis. The sequence is that of UDP-3-O-acyl-N-acetylglucosamine deacetylase from Syntrophus aciditrophicus (strain SB).